The following is a 675-amino-acid chain: Mitochondrial distribution and morphology protein 12 (675 aa).

Positions methionine 1–valine 675 constitute an SMP-LTD domain. Disordered stretches follow at residues leucine 66–histidine 186, glycine 241–glycine 270, glycine 307–threonine 327, threonine 365–alanine 390, and proline 444–glutamate 517. The span at serine 78–valine 101 shows a compositional bias: acidic residues. Residues asparagine 123–glycine 137 are compositionally biased toward low complexity. Gly residues predominate over residues glycine 261 to glycine 270. A compositionally biased stretch (low complexity) spans proline 317–threonine 327. 2 stretches are compositionally biased toward polar residues: residues proline 373 to glycine 382 and valine 454 to alanine 469. Over residues glutamate 497–glutamate 510 the composition is skewed to acidic residues.

It belongs to the MDM12 family. In terms of assembly, component of the ER-mitochondria encounter structure (ERMES) or MDM complex, composed of mmm-1, mdm10, mdm12 and mdm34. A mmm-1 homodimer associates with one molecule of mdm12 on each side in a pairwise head-to-tail manner, and the SMP-LTD domains of mmm-1 and mdm12 generate a continuous hydrophobic tunnel for phospholipid trafficking.

It localises to the mitochondrion outer membrane. The protein resides in the endoplasmic reticulum membrane. Functionally, component of the ERMES/MDM complex, which serves as a molecular tether to connect the endoplasmic reticulum (ER) and mitochondria. Components of this complex are involved in the control of mitochondrial shape and protein biogenesis, and function in nonvesicular lipid trafficking between the ER and mitochondria. Mdm12 is required for the interaction of the ER-resident membrane protein MMM1 and the outer mitochondrial membrane-resident beta-barrel protein mdm10. The mdm12-mmm-1 subcomplex functions in the major beta-barrel assembly pathway that is responsible for biogenesis of all mitochondrial outer membrane beta-barrel proteins, and acts in a late step after the SAM complex. The mdm10-mdm12-mmm-1 subcomplex further acts in the TOM40-specific pathway after the action of the mdm12-mmm1 complex. Essential for establishing and maintaining the structure of mitochondria and maintenance of mtDNA nucleoids. The polypeptide is Mitochondrial distribution and morphology protein 12 (Neurospora crassa (strain ATCC 24698 / 74-OR23-1A / CBS 708.71 / DSM 1257 / FGSC 987)).